The primary structure comprises 206 residues: Alpha-1-acid glycoprotein 3 (206 aa).

Residues 1–18 form the signal peptide; it reads MELHTVLIMLSLLPLLEA. 3 N-linked (GlcNAc...) asparagine glycosylation sites follow: Asn-33, Asn-75, and Asn-103. Cysteines 90 and 183 form a disulfide. Positions 187–206 are disordered; that stretch reads EKKHLELEKETKKDPEESQA.

The protein belongs to the calycin superfamily. Lipocalin family.

The protein localises to the secreted. Its function is as follows. Functions as a transport protein in the blood stream. Binds various ligands in the interior of its beta-barrel domain. Appears to function in modulating the activity of the immune system during the acute-phase reaction. This Mus musculus (Mouse) protein is Alpha-1-acid glycoprotein 3 (Orm3).